Here is a 92-residue protein sequence, read N- to C-terminus: MTSSRFIITVIGSDRVGIVARITTVMASYNVNIVDISQTIMQGIFTMIMLAEAPKENFDLAAFQQAMDAEGKSLGVEVKVQHEDAFRFMHRI.

Positions 7-81 (IITVIGSDRV…KSLGVEVKVQ (75 aa)) constitute an ACT domain.

The protein belongs to the UPF0237 family.

This is UPF0237 protein MM_0082 from Methanosarcina mazei (strain ATCC BAA-159 / DSM 3647 / Goe1 / Go1 / JCM 11833 / OCM 88) (Methanosarcina frisia).